Reading from the N-terminus, the 772-residue chain is 5-methyltetrahydropteroyltriglutamate--homocysteine methyltransferase (772 aa).

5-methyltetrahydropteroyltri-L-glutamate-binding positions include 24–27 (RELK) and Lys120. Residues 446–448 (IGS) and Glu499 each bind L-homocysteine. L-methionine contacts are provided by residues 446-448 (IGS) and Glu499. 5-methyltetrahydropteroyltri-L-glutamate is bound at residue Trp576. Residue Asp614 participates in L-homocysteine binding. Residue Asp614 participates in L-methionine binding. Glu620 is a binding site for 5-methyltetrahydropteroyltri-L-glutamate. Zn(2+) is bound by residues His656, Cys658, and Glu680. The Proton donor role is filled by His709. Zn(2+) is bound at residue Cys741.

Belongs to the vitamin-B12 independent methionine synthase family. Requires Zn(2+) as cofactor.

It catalyses the reaction 5-methyltetrahydropteroyltri-L-glutamate + L-homocysteine = tetrahydropteroyltri-L-glutamate + L-methionine. Its pathway is amino-acid biosynthesis; L-methionine biosynthesis via de novo pathway; L-methionine from L-homocysteine (MetE route): step 1/1. Functionally, catalyzes the transfer of a methyl group from 5-methyltetrahydrofolate to homocysteine resulting in methionine formation. This chain is 5-methyltetrahydropteroyltriglutamate--homocysteine methyltransferase, found in Streptomyces coelicolor (strain ATCC BAA-471 / A3(2) / M145).